A 203-amino-acid chain; its full sequence is Glycerol-3-phosphate acyltransferase (203 aa).

The next 4 membrane-spanning stretches (helical) occupy residues 6-26 (LTLLMIVAAYLAGSVSSAVLV), 82-102 (AISLGLIAIAACLGHIYPIFF), 118-138 (APIGDDLAICLMASWVVLVLI), and 141-161 (YSSLAAIITALLAPLYTWWLD).

The protein belongs to the PlsY family. As to quaternary structure, probably interacts with PlsX.

The protein localises to the cell inner membrane. The catalysed reaction is an acyl phosphate + sn-glycerol 3-phosphate = a 1-acyl-sn-glycero-3-phosphate + phosphate. It participates in lipid metabolism; phospholipid metabolism. Catalyzes the transfer of an acyl group from acyl-phosphate (acyl-PO(4)) to glycerol-3-phosphate (G3P) to form lysophosphatidic acid (LPA). This enzyme utilizes acyl-phosphate as fatty acyl donor, but not acyl-CoA or acyl-ACP. This Shewanella sp. (strain ANA-3) protein is Glycerol-3-phosphate acyltransferase.